A 173-amino-acid chain; its full sequence is Lectin BRA-2 (173 aa).

The N-linked (GlcNAc...) asparagine glycan is linked to Asn-39. 3 cysteine pairs are disulfide-bonded: Cys-47–Cys-61, Cys-78–Cys-168, and Cys-144–Cys-160. In terms of domain architecture, C-type lectin spans 51 to 170 (PNGWVTSENK…NDRYNFVCEI (120 aa)).

In terms of assembly, homohexamer; disulfide-linked. Coelemic fluid.

In terms of biological role, sugar-binding protein which recognizes specific carbohydrate structures and agglutinates a variety of animal cells by binding to cell-surface glycoproteins and glycolipids. Calcium-dependent lectin. Invertebrate lectins may be involved in defense functions. The polypeptide is Lectin BRA-2 (Megabalanus rosa (Acorn barnacle)).